The sequence spans 241 residues: Methylthioribulose-1-phosphate dehydratase (241 aa).

Polar residues predominate over residues 1 to 11 (MSSLCDTSNGE). The tract at residues 1 to 20 (MSSLCDTSNGESHADPCQDK) is disordered. C96 contributes to the substrate binding site. Zn(2+) is bound by residues H114 and H116. E138 acts as the Proton donor/acceptor in catalysis. H194 is a Zn(2+) binding site.

Belongs to the aldolase class II family. MtnB subfamily. Zn(2+) serves as cofactor.

It is found in the cytoplasm. It catalyses the reaction 5-(methylsulfanyl)-D-ribulose 1-phosphate = 5-methylsulfanyl-2,3-dioxopentyl phosphate + H2O. It participates in amino-acid biosynthesis; L-methionine biosynthesis via salvage pathway; L-methionine from S-methyl-5-thio-alpha-D-ribose 1-phosphate: step 2/6. Its function is as follows. Catalyzes the dehydration of methylthioribulose-1-phosphate (MTRu-1-P) into 2,3-diketo-5-methylthiopentyl-1-phosphate (DK-MTP-1-P). Functions in the methionine salvage pathway. May play a role in apoptosis. In Osmerus mordax (Rainbow smelt), this protein is Methylthioribulose-1-phosphate dehydratase.